A 293-amino-acid polypeptide reads, in one-letter code: Elongation factor Ts (293 aa).

An involved in Mg(2+) ion dislocation from EF-Tu region spans residues 80 to 83 (TDFV).

This sequence belongs to the EF-Ts family.

The protein resides in the cytoplasm. In terms of biological role, associates with the EF-Tu.GDP complex and induces the exchange of GDP to GTP. It remains bound to the aminoacyl-tRNA.EF-Tu.GTP complex up to the GTP hydrolysis stage on the ribosome. This chain is Elongation factor Ts, found in Burkholderia thailandensis (strain ATCC 700388 / DSM 13276 / CCUG 48851 / CIP 106301 / E264).